The primary structure comprises 217 residues: Phosphoenolpyruvate guanylyltransferase (217 aa).

Positions 150, 165, and 168 each coordinate phosphoenolpyruvate.

This sequence belongs to the CofC family.

The catalysed reaction is phosphoenolpyruvate + GTP + H(+) = enolpyruvoyl-2-diphospho-5'-guanosine + diphosphate. Its pathway is cofactor biosynthesis; coenzyme F420 biosynthesis. Functionally, guanylyltransferase that catalyzes the activation of phosphoenolpyruvate (PEP) as enolpyruvoyl-2-diphospho-5'-guanosine, via the condensation of PEP with GTP. It is involved in the biosynthesis of coenzyme F420, a hydride carrier cofactor. This Mycobacterium marinum (strain ATCC BAA-535 / M) protein is Phosphoenolpyruvate guanylyltransferase.